Consider the following 189-residue polypeptide: MQVILLQRVAKLGQMGEVVNVKDGYARNFLLPQGKALRANESNIKSFEARKAQLEAQNLETKKEAAAVAEKLDGQSFVVIRSASDSGALYGSVTTRDAAEAATEAGFTVGRGQIVLDRPIKDLGLHTVTVTLHPEVVVKITLNVARSVEEAELQASGKSIQELAAEAEAAADFEIAELFDEIGAASQDD.

The protein belongs to the bacterial ribosomal protein bL9 family.

Functionally, binds to the 23S rRNA. This chain is Large ribosomal subunit protein bL9, found in Cereibacter sphaeroides (strain KD131 / KCTC 12085) (Rhodobacter sphaeroides).